The following is a 315-amino-acid chain: Ribosomal large subunit pseudouridine synthase C (315 aa).

An S4 RNA-binding domain is found at 20–93 (QRIDNFLRNQ…TKLNKVAELQ (74 aa)). Asp-145 is a catalytic residue.

Belongs to the pseudouridine synthase RluA family.

It carries out the reaction uridine(955/2504/2580) in 23S rRNA = pseudouridine(955/2504/2580) in 23S rRNA. Functionally, responsible for synthesis of pseudouridine from uracil at positions 955, 2504 and 2580 in 23S ribosomal RNA. This is Ribosomal large subunit pseudouridine synthase C (rluC) from Vibrio vulnificus (strain CMCP6).